Here is a 170-residue protein sequence, read N- to C-terminus: Ribosome maturation factor RimM (170 aa).

A PRC barrel domain is found at 98–170; that stretch reads PDEYYWVDLE…RIVVDWDPEF (73 aa).

The protein belongs to the RimM family. Binds ribosomal protein uS19.

It is found in the cytoplasm. Its function is as follows. An accessory protein needed during the final step in the assembly of 30S ribosomal subunit, possibly for assembly of the head region. Essential for efficient processing of 16S rRNA. May be needed both before and after RbfA during the maturation of 16S rRNA. It has affinity for free ribosomal 30S subunits but not for 70S ribosomes. This Xylella fastidiosa (strain 9a5c) protein is Ribosome maturation factor RimM.